Reading from the N-terminus, the 463-residue chain is Calcitonin gene-related peptide type 1 receptor (463 aa).

A signal peptide spans 1-22 (MDKKHILCFLVLLPLNMALISA). The Extracellular portion of the chain corresponds to 23-138 (ESEEGVNQTD…STHEKVKTAL (116 aa)). N-linked (GlcNAc...) asparagine glycans are attached at residues Asn-29, Asn-65, Asn-117, Asn-122, Asn-127, and Asn-128. Cystine bridges form between Cys-47-Cys-73, Cys-64-Cys-104, and Cys-87-Cys-126. The helical transmembrane segment at 139-163 (NLFYLTIIGHGLSIASLIISLIIFF) threads the bilayer. Residues 164–174 (YFKSLSCQRIT) are Cytoplasmic-facing. A helical membrane pass occupies residues 175 to 197 (LHKNLFFSFICNSIVTIIHLTAV). The Extracellular segment spans residues 198 to 208 (ANNQALVATNP). A helical membrane pass occupies residues 209-237 (VSCKVSQFIHLYLMGCNYFWMLCEGVYLH). Residues 238 to 251 (TLIVVAVFAEKQHL) are Cytoplasmic-facing. A helical membrane pass occupies residues 252 to 272 (MWYYFLGWGFPLLPACIHAIA). At 273–288 (RSLYYNDNCWISSDTH) the chain is on the extracellular side. Positions 287-288 (TH) are required for RAMP3 interaction. A helical membrane pass occupies residues 289 to 313 (LLYIIHGPICAALLVNLFFLLNIVR). At 314–328 (VLITKLKVTHQVESN) the chain is on the cytoplasmic side. A helical transmembrane segment spans residues 329-350 (LYMKAVRATLILVPLLGIEFVL). Residues 351-365 (FPWRPEGKVAEEVYD) lie on the Extracellular side of the membrane. A helical membrane pass occupies residues 366–386 (YVMHILMHFQGLLVATIFCFF). The Cytoplasmic portion of the chain corresponds to 387-463 (NGEVQAILRR…KSENMYDLVM (77 aa)). A phosphoserine mark is found at Ser-419 and Ser-444.

Belongs to the G-protein coupled receptor 2 family. Heterodimer of CALCRL and RAMP1; the receptor complex functions as CGRP receptor. Heterodimer of CALCRL and RAMP2 or CALCRL and RAMP3; the complexes function as adrenomedullin receptor. As to expression, expressed predominantly in the lung, thymus, heart and brain.

The protein resides in the cell membrane. Functionally, g protein-coupled receptor which specificity is determined by its interaction with receptor-activity-modifying proteins (RAMPs). Together with RAMP1, form the receptor complex for calcitonin-gene-related peptides CALCA/CGRP1 and CALCB/CGRP2. Together with RAMP2 or RAMP3, function as receptor complexes for adrenomedullin (ADM and ADM2). Ligand binding causes a conformation change that triggers signaling via guanine nucleotide-binding proteins (G proteins) and modulates the activity of downstream effectors. Activates cAMP-dependent pathway. This is Calcitonin gene-related peptide type 1 receptor from Mus musculus (Mouse).